A 62-amino-acid polypeptide reads, in one-letter code: Sperm protamine P1 (62 aa).

The disordered stretch occupies residues 1–62; sequence MARYRRHSRS…RYSRRGRRRY (62 aa).

This sequence belongs to the protamine P1 family. Testis.

The protein resides in the nucleus. The protein localises to the chromosome. In terms of biological role, protamines substitute for histones in the chromatin of sperm during the haploid phase of spermatogenesis. They compact sperm DNA into a highly condensed, stable and inactive complex. In Antechinomys laniger (Eastern jerboa marsupial), this protein is Sperm protamine P1 (PRM1).